A 485-amino-acid polypeptide reads, in one-letter code: Cholesterol 16,22-dihydroxylase CYP90G4 (485 aa).

A helical transmembrane segment spans residues 4–24; the sequence is VVILFFLFPTLLVLVVAVLGL. Cys-432 is a binding site for heme.

It belongs to the cytochrome P450 family. As to expression, mainly expressed in leaves and, at low levels, in roots and stems.

The protein resides in the membrane. The enzyme catalyses cholesterol + 2 reduced [NADPH--hemoprotein reductase] + 2 O2 = (16S,22S)-dihydroxycholesterol + 2 oxidized [NADPH--hemoprotein reductase] + 2 H2O + 2 H(+). It participates in steroid metabolism; cholesterol metabolism. In terms of biological role, involved in the biosynthesis of spiroketal steroid and saponin natural products from cholesterol such as diosgenin and analogs (e.g. furostanol and spirostanol), plant defense compounds used as main precursors for the industrial production of steroid hormones. During the 5,6-spiroketalization of cholesterol, catalyzes the hydroxylation of cholesterol to form 16S,22S-dihydroxycholesterol and, possibly, the subsequent conversion of 16S,22S-dihydroxycholesterol into 16-oxo-22-hydroxy-cholesterol and 16-hydroxy-22-oxo-cholesterol. 16-hydroxy-22-oxo-cholesterol submit a spontaneous reaction leading to the production of furostanol-type steroid diastereomers, precursors of diosgenin. The protein is Cholesterol 16,22-dihydroxylase CYP90G4 of Paris polyphylla (Daiswa polyphylla).